Here is a 518-residue protein sequence, read N- to C-terminus: uncharacterized protein (518 aa).

Its subcellular location is the virion. This is an uncharacterized protein from Acanthamoeba polyphaga (Amoeba).